Consider the following 341-residue polypeptide: Beta-ketoacyl-[acyl-carrier-protein] synthase III 1 (341 aa).

Residues Cys-113 and His-249 contribute to the active site. The ACP-binding stretch occupies residues 250–254 (QANIR). Residue Asn-279 is part of the active site.

Belongs to the thiolase-like superfamily. FabH family. In terms of assembly, homodimer.

The protein localises to the cytoplasm. It catalyses the reaction malonyl-[ACP] + acetyl-CoA + H(+) = 3-oxobutanoyl-[ACP] + CO2 + CoA. It functions in the pathway lipid metabolism; fatty acid biosynthesis. Its function is as follows. Catalyzes the condensation reaction of fatty acid synthesis by the addition to an acyl acceptor of two carbons from malonyl-ACP. Catalyzes the first condensation reaction which initiates fatty acid synthesis and may therefore play a role in governing the total rate of fatty acid production. Possesses both acetoacetyl-ACP synthase and acetyl transacylase activities. Its substrate specificity determines the biosynthesis of branched-chain and/or straight-chain of fatty acids. This is Beta-ketoacyl-[acyl-carrier-protein] synthase III 1 from Deinococcus radiodurans (strain ATCC 13939 / DSM 20539 / JCM 16871 / CCUG 27074 / LMG 4051 / NBRC 15346 / NCIMB 9279 / VKM B-1422 / R1).